The following is a 689-amino-acid chain: SH3 domain-binding protein 1 (689 aa).

Over residues 1 to 11 (MMKRQLHRMRQ) the composition is skewed to basic residues. Positions 1–24 (MMKRQLHRMRQLAHTGSSGRTPET) are disordered. Residues 1-275 (MMKRQLHRMR…TAAPFSRVYG (275 aa)) are interaction with CGNL1. The BAR domain occupies 17–262 (SSGRTPETAE…RDNHSQADSS (246 aa)). A phosphoserine mark is found at Ser-241 and Ser-262. One can recognise a Rho-GAP domain in the interval 276 to 469 (VSLRTHLQDL…VLIQNADTLF (194 aa)). Residues 470–689 (PGDINFSVSG…RPRGLISETD (220 aa)) are interaction with CD2AP. The interval 507-689 (TAATPTPTPA…RPRGLISETD (183 aa)) is disordered. Ser-539 and Ser-545 each carry phosphoserine. The segment covering 565-575 (PARPTMPPPQP) has biased composition (pro residues). Low complexity predominate over residues 576–594 (SSSRSSPPALSLPAGSVSP). Ser-586 is subject to Phosphoserine. Residue Thr-596 is modified to Phosphothreonine. The short motif at 611–620 (APTVPPPLPP) is the SH3-binding element. Residues 613–625 (TVPPPLPPAPPQP) are compositionally biased toward pro residues. Ser-641 is subject to Phosphoserine. The span at 670-680 (PPTPVLPPQPR) shows a compositional bias: pro residues.

As to quaternary structure, interacts with RAC1. Interacts with the exocyst via EXOC4 and EXOC8; required for the localization of both SH3BP1 and the exocyst to the leading edge of migrating cells. Interacts with CD2AP and CGNL1; probably part of a complex at cell junctions. Interacts with CAPZA1; recruits CAPZA1 to forming cell junctions. May interact with AFDN. Interacts with PLXND1; they dissociate upon SEMA3E binding to PLXND1 allowing SH3BP1 to transduce downstream signal through RAC1 inactivation. Interacts with ABL1, GRB2 and SRC (via SH3 domain).

The protein localises to the cell projection. Its subcellular location is the cell junction. It is found in the tight junction. The protein resides in the adherens junction. It localises to the phagocytic cup. The protein localises to the nucleus. Its subcellular location is the cytoplasm. It is found in the cytosol. GTPase activating protein/GAP which specifically converts GTP-bound Rho-type GTPases including RAC1 and CDC42 in their inactive GDP-bound form. By specifically inactivating RAC1 at the leading edge of migrating cells, it regulates the spatiotemporal organization of cell protrusions which is important for proper cell migration. Also negatively regulates CDC42 in the process of actin remodeling and the formation of epithelial cell junctions. Through its GAP activity toward RAC1 and/or CDC42 plays a specific role in phagocytosis of large particles. Specifically recruited by a PI3 kinase/PI3K-dependent mechanism to sites of large particles engagement, inactivates RAC1 and/or CDC42 allowing the reorganization of the underlying actin cytoskeleton required for engulfment. It also plays a role in angiogenesis and the process of repulsive guidance as part of a semaphorin-plexin signaling pathway. Following the binding of PLXND1 to extracellular SEMA3E it dissociates from PLXND1 and inactivates RAC1, inducing the intracellular reorganization of the actin cytoskeleton and the collapse of cells. This is SH3 domain-binding protein 1 from Rattus norvegicus (Rat).